The sequence spans 186 residues: Golgi apparatus membrane protein-like protein ECHIDNA (186 aa).

The residue at position 1 (methionine 1) is an N-acetylmethionine. 3 helical membrane passes run 35-55 (ILSA…VLLA), 108-128 (FWWT…FSLI), and 132-152 (ADYL…IIGF).

It belongs to the TVP23 family. In terms of assembly, component of a trans-Golgi network (TGN)-localized ECH/YIP4 complex made of ECH, YIP4A and YIP4B. Interacts directly with YIP4A and YIP4B.

It is found in the golgi apparatus. It localises to the trans-Golgi network membrane. Its subcellular location is the early endosome membrane. Functionally, mediates trans-Golgi-network trafficking and cell elongation. Required for keeping the appropriate balance between secretory trafficking and vacuolar targeting of a subset of proteins. The ECH/YIP4 complex is involved in the modulation of the trans-Golgi network (TGN)-mediated trafficking of some proteins and cell wall components (e.g. pectin and hemicellulose) to the cell wall in dark-grown hypocotyls and in secretory cells of the seed coat. The protein is Golgi apparatus membrane protein-like protein ECHIDNA of Arabidopsis thaliana (Mouse-ear cress).